The primary structure comprises 329 residues: Serine, glycine and glutamine-rich protein (329 aa).

An N-terminal signal peptide occupies residues 1-16; sequence MKTVLLFVVLVGLAYC. The span at 38 to 48 shows a compositional bias: low complexity; sequence SSSSSSSSSSS. A disordered region spans residues 38 to 80; the sequence is SSSSSSSSSSSSGGGGSSGGGASGGGGGSSSGGGGASGGGGGG. Over residues 49–80 the composition is skewed to gly residues; it reads SGGGGSSGGGASGGGGGSSSGGGGASGGGGGG.

Prismatic layer of shell (at protein level). Expressed primarily in the mantle with highest level in the mantle edge and lower level in the mantle pallium.

Its subcellular location is the secreted. This is Serine, glycine and glutamine-rich protein from Pinctada maxima (Silver-lipped pearl oyster).